The chain runs to 621 residues: Glutathione-regulated potassium-efflux system protein KefC (621 aa).

12 helical membrane passes run 4–24, 26–46, 54–74, 90–110, 114–134, 149–169, 178–198, 218–238, 270–290, 294–314, 326–346, and 359–379; these read HTLIQALIYLGAAALIVPIAV, LGLGSVLGYLIAGCIIGPWGL, AILHFAEIGVVLMLFVIGLEL, GALQMVACGVLIGLFCMLLGL, VAELIGMTLALSSTAIAMQAM, FAVLLFQDIAAIPLVAMIPLL, LVAFALSALKVAAALALVVAL, VFSAVALFLVFGFGLLLEEVG, GLLLGLFFIGVGMSIDFGTLV, LRIVILLVGFLAIKMLMLWLI, RWFAVLLGQGSEFAFVVFGAA, and ALTLAVALSMAATPVLLVLLT. Residues 399-518 enclose the RCK N-terminal domain; it reads QPRVIVAGFG…AGVEAPERET (120 aa). A disordered region spans residues 598-621; it reads GWQGTEEGRHTGDIADEPENKPSA.

Belongs to the monovalent cation:proton antiporter 2 (CPA2) transporter (TC 2.A.37) family. KefC subfamily. In terms of assembly, homodimer. Interacts with the regulatory subunit KefF.

The protein resides in the cell inner membrane. Functionally, pore-forming subunit of a potassium efflux system that confers protection against electrophiles. Catalyzes K(+)/H(+) antiport. This chain is Glutathione-regulated potassium-efflux system protein KefC, found in Klebsiella pneumoniae (strain 342).